The following is an 820-amino-acid chain: Mitogen-activated protein kinase kinase kinase kinase 2 (820 aa).

The Protein kinase domain occupies 16–273 (FELLQRVGAG…AEKLLQHPFT (258 aa)). ATP is bound by residues 22-30 (VGAGTYGDV) and Lys45. Asp136 functions as the Proton acceptor in the catalytic mechanism. Positions 294–314 (LGTPSPEDCELETYDMFPDTI) are PEST1. The residue at position 328 (Ser328) is a Phosphoserine. Residues 344-360 (ETDPLNEPWEEEWTLLG) are PEST2. The tract at residues 387 to 442 (SEFQELDSPDDTMGTIKRAPFLGPLPTDPPAEEPLSSPPGTLPPPPSGPNSSPLLP) is disordered. At Ser394 the chain carries Phosphoserine. Residues 405–448 (APFLGPLPTDPPAEEPLSSPPGTLPPPPSGPNSSPLLPTAWATM) form a PEST3 region. The segment covering 422 to 434 (SSPPGTLPPPPSG) has biased composition (pro residues). The CNH domain maps to 482-793 (PLRIHAAVTW…IFRVLGAHRD (312 aa)).

This sequence belongs to the protein kinase superfamily. STE Ser/Thr protein kinase family. STE20 subfamily. As to quaternary structure, interacts with TRAF2, TRAF6, MAP3K1/MEKK1 and MAP3K11/MLK3. Interacts with RAB8A. The cofactor is Mg(2+). In terms of processing, polyubiquitinated through 'Lys-48'-polyubiquitin chains, allowing proteasomal turnover. Ubiquitination requires the kinase activity of MAP4K2/GCK. Post-translationally, autophosphorylated in response to tumor necrosis factor (TNF), endotoxins or pro-inflammatory stimuli. Autophosphorylation leads to activation. Highly expressed in germinal center but not mantle zone B-cells. Also expressed in lung, brain and placenta and at lower levels in other tissues examined.

It localises to the cytoplasm. The protein localises to the basolateral cell membrane. Its subcellular location is the golgi apparatus membrane. It catalyses the reaction L-seryl-[protein] + ATP = O-phospho-L-seryl-[protein] + ADP + H(+). The enzyme catalyses L-threonyl-[protein] + ATP = O-phospho-L-threonyl-[protein] + ADP + H(+). Its activity is regulated as follows. The tumor necrosis factor (TNF), as well as endotoxins and pro-inflammatory stimuli such as polyinosine-polycytidine (poly(IC)), lipopolysaccharides (LPS), peptidoglycan (PGN), flagellin, or lipid A activate MAP4K2 by promoting its autophosphorylation. Its function is as follows. Serine/threonine-protein kinase which acts as an essential component of the MAP kinase signal transduction pathway. Acts as a MAPK kinase kinase kinase (MAP4K) and is an upstream activator of the stress-activated protein kinase/c-Jun N-terminal kinase (SAP/JNK) signaling pathway and to a lesser extent of the p38 MAPKs signaling pathway. Required for the efficient activation of JNKs by TRAF6-dependent stimuli, including pathogen-associated molecular patterns (PAMPs) such as polyinosine-polycytidine (poly(IC)), lipopolysaccharides (LPS), lipid A, peptidoglycan (PGN), or bacterial flagellin. To a lesser degree, IL-1 and engagement of CD40 also stimulate MAP4K2-mediated JNKs activation. The requirement for MAP4K2/GCK is most pronounced for LPS signaling, and extends to LPS stimulation of c-Jun phosphorylation and induction of IL-8. Enhances MAP3K1 oligomerization, which may relieve N-terminal mediated MAP3K1 autoinhibition and lead to activation following autophosphorylation. Also mediates the SAP/JNK signaling pathway and the p38 MAPKs signaling pathway through activation of the MAP3Ks MAP3K10/MLK2 and MAP3K11/MLK3. May play a role in the regulation of vesicle targeting or fusion. regulation of vesicle targeting or fusion. Activator of the Hippo signaling pathway which plays a pivotal role in organ size control and tumor suppression by restricting proliferation and promoting apoptosis. MAP4Ks act in parallel to and are partially redundant with STK3/MST2 and STK4/MST2 in the phosphorylation and activation of LATS1/2, and establish MAP4Ks as components of the expanded Hippo pathway. In Homo sapiens (Human), this protein is Mitogen-activated protein kinase kinase kinase kinase 2.